A 570-amino-acid chain; its full sequence is Multidrug and toxin extrusion protein 1 (570 aa).

M1 carries the N-acetylmethionine modification. Over 1–37 (MEAPEEPAPVRGGPEATLEIHGSRFLRLSAFREELRA) the chain is Cytoplasmic. A helical transmembrane segment spans residues 38–58 (LLVLAGPAFLVQLMVFLISFI). Residues 59 to 72 (SSVFCGHLGKLELD) are Extracellular-facing. Residues 73-93 (AVTLAIAVINVTGVSVGFGLS) traverse the membrane as a helical segment. Topologically, residues 94-120 (SACDTLISQTYGSQNLKHVGVILQRSA) are cytoplasmic. The helical transmembrane segment at 121 to 141 (LILLLCCFPCWALFLNTQHIL) threads the bilayer. The Extracellular segment spans residues 142–152 (LLFRQDPDVSR). A helical transmembrane segment spans residues 153–173 (LTQTYVTIFIPALPATFLYML). Residues 174 to 176 (QVK) are Cytoplasmic-facing. A helical transmembrane segment spans residues 177-197 (YLLNQGIVLPQIVTGVAANLV). Residues 198–216 (NALANYLFLHQLHLGAIGS) lie on the Extracellular side of the membrane. Residues 217–237 (ALANLISQYTLALLLFFYILG) form a helical membrane-spanning segment. Residues 238–251 (KKLHQATWGGWSLE) are Cytoplasmic-facing. The chain crosses the membrane as a helical span at residues 252 to 272 (CLQDWASFLHLAVPSMLMLCM). Over 273 to 295 (EWWAYEVGSFLSGILGMVELGAQ) the chain is Extracellular. Residues 296 to 316 (SIVYELAIIVYMVPAGFSVAA) traverse the membrane as a helical segment. The Cytoplasmic segment spans residues 317-336 (SVRVGNALGAGDMEQARKSS). A helical membrane pass occupies residues 337-357 (TVSLLITVLFAVAFSVLLLSC). Topologically, residues 358–370 (KDHVGYIFTTDRD) are extracellular. The helical transmembrane segment at 371 to 391 (IINLVAQVVPIYAVSHLFEAL) threads the bilayer. The Cytoplasmic portion of the chain corresponds to 392-408 (ACTSGGVLRGSGNQKVG). A helical membrane pass occupies residues 409–429 (AIVNTIGYYVVGLPIGIALMF). At 430-437 (ATKLGVMG) the chain is on the extracellular side. The chain crosses the membrane as a helical span at residues 438–458 (LWSGIIICTVFQAVCFLGFII). The Cytoplasmic segment spans residues 459–546 (QLNWKKACQQ…LSRKQLVLRR (88 aa)). The disordered stretch occupies residues 508–534 (DVGKTGETQSDQQMRQEEPLPEHPQDS). Residues 521 to 533 (MRQEEPLPEHPQD) show a composition bias toward basic and acidic residues. Residues 547-567 (GLLLLGVFLILLVGILVRFYV) form a helical membrane-spanning segment. At 568 to 570 (RIQ) the chain is on the extracellular side.

The protein belongs to the multi antimicrobial extrusion (MATE) (TC 2.A.66.1) family.

It is found in the cell membrane. The protein resides in the apical cell membrane. It carries out the reaction thiamine(out) + H(+)(in) = thiamine(in) + H(+)(out). The catalysed reaction is estrone 3-sulfate(in) + H(+)(out) = estrone 3-sulfate(out) + H(+)(in). It catalyses the reaction creatinine(in) + H(+)(out) = creatinine(out) + H(+)(in). The enzyme catalyses agmatine(in) + H(+)(out) = agmatine(out) + H(+)(in). Its function is as follows. Multidrug efflux pump that functions as a H(+)/organic cation antiporter. Plays a physiological role in the excretion of cationic compounds including endogenous metabolites, drugs, toxins through the kidney and liver, into urine and bile respectively. Mediates the efflux of endogenous compounds such as creatinine, vitamin B1/thiamine, agmatine and estrone-3-sulfate. May also contribute to regulate the transport of cationic compounds in testis across the blood-testis-barrier. This is Multidrug and toxin extrusion protein 1 (SLC47A1) from Pongo abelii (Sumatran orangutan).